Here is a 461-residue protein sequence, read N- to C-terminus: tRNA(Ile)-lysidine synthase (461 aa).

Position 26 to 31 (26 to 31) interacts with ATP; it reads SGGPDS.

Belongs to the tRNA(Ile)-lysidine synthase family.

Its subcellular location is the cytoplasm. It carries out the reaction cytidine(34) in tRNA(Ile2) + L-lysine + ATP = lysidine(34) in tRNA(Ile2) + AMP + diphosphate + H(+). In terms of biological role, ligates lysine onto the cytidine present at position 34 of the AUA codon-specific tRNA(Ile) that contains the anticodon CAU, in an ATP-dependent manner. Cytidine is converted to lysidine, thus changing the amino acid specificity of the tRNA from methionine to isoleucine. This is tRNA(Ile)-lysidine synthase from Clostridium acetobutylicum (strain ATCC 824 / DSM 792 / JCM 1419 / IAM 19013 / LMG 5710 / NBRC 13948 / NRRL B-527 / VKM B-1787 / 2291 / W).